Reading from the N-terminus, the 584-residue chain is POTE ankyrin domain family member D (584 aa).

ANK repeat units follow at residues 172–201 (EKRT…QLNV), 205–234 (KKRT…DRNI), 238–267 (YGNT…DIES), 271–300 (CGLT…NLNV), 304–333 (YGRT…DVSS), and 337–366 (SGQT…KQML). Positions 369–502 (SSENSNPEQD…ILTNKQKQIE (134 aa)) are disordered. Basic and acidic residues-rich tracts occupy residues 377-392 (QDLK…RLKV), 401-412 (MSQEPEINKDCD), and 466-481 (EEYH…KQLS). The span at 482–498 (EEQNTGISQDEILTNKQ) shows a compositional bias: polar residues. Residues 494 to 583 (LTNKQKQIEV…LNEEALTKTN (90 aa)) adopt a coiled-coil conformation.

This sequence belongs to the POTE family. As to expression, expressed in prostate, ovary, testis, placenta and prostate cancer cell lines. Localizes to basal and terminal prostate epithelial cells.

The protein localises to the cell membrane. The polypeptide is POTE ankyrin domain family member D (POTED) (Homo sapiens (Human)).